We begin with the raw amino-acid sequence, 472 residues long: Putative F-box/LRR-repeat protein At5g54820 (472 aa).

The 49-residue stretch at 6–54 (QDRLSSLPDILLIMIISFLPLKECVRTSVLSKRWRYLCLETTNLSFKES) folds into the F-box domain. LRR repeat units follow at residues 58-87 (NPDI…SITQ), 135-164 (NGDI…KIYG), 183-208 (IGWV…SIKN), 225-250 (VIEH…KYSG), 283-308 (SSRI…TVCP), and 338-363 (MHTK…GFDI).

This is Putative F-box/LRR-repeat protein At5g54820 from Arabidopsis thaliana (Mouse-ear cress).